The primary structure comprises 280 residues: Nitrogenase iron protein (280 aa).

9-16 (GKGGIGKS) lines the ATP pocket. Cys-97 provides a ligand contact to [4Fe-4S] cluster. At Arg-100 the chain carries ADP-ribosylarginine; by dinitrogenase reductase ADP-ribosyltransferase. A [4Fe-4S] cluster-binding site is contributed by Cys-132.

It belongs to the NifH/BchL/ChlL family. As to quaternary structure, homodimer. The cofactor is [4Fe-4S] cluster. In terms of processing, the reversible ADP-ribosylation of Arg-100 inactivates the nitrogenase reductase and regulates nitrogenase activity.

The catalysed reaction is N2 + 8 reduced [2Fe-2S]-[ferredoxin] + 16 ATP + 16 H2O = H2 + 8 oxidized [2Fe-2S]-[ferredoxin] + 2 NH4(+) + 16 ADP + 16 phosphate + 6 H(+). The key enzymatic reactions in nitrogen fixation are catalyzed by the nitrogenase complex, which has 2 components: the iron protein and the molybdenum-iron protein. The polypeptide is Nitrogenase iron protein (Desulforudis audaxviator (strain MP104C)).